The sequence spans 186 residues: 3-hydroxyanthranilate 3,4-dioxygenase (186 aa).

R44 is a binding site for O2. Residues H48, E54, and H96 each coordinate Fe cation. E54 contributes to the substrate binding site. Substrate is bound by residues R100 and E110. Residues C125, C130, C164, and C167 each contribute to the a divalent metal cation site.

The protein belongs to the 3-HAO family. The cofactor is Fe(2+).

The protein resides in the cytoplasm. It carries out the reaction 3-hydroxyanthranilate + O2 = (2Z,4Z)-2-amino-3-carboxymuconate 6-semialdehyde. The protein operates within cofactor biosynthesis; NAD(+) biosynthesis; quinolinate from L-kynurenine: step 3/3. Its function is as follows. Catalyzes the oxidative ring opening of 3-hydroxyanthranilate to 2-amino-3-carboxymuconate semialdehyde, which spontaneously cyclizes to quinolinate. The polypeptide is 3-hydroxyanthranilate 3,4-dioxygenase (Chaetomium globosum (strain ATCC 6205 / CBS 148.51 / DSM 1962 / NBRC 6347 / NRRL 1970) (Soil fungus)).